Reading from the N-terminus, the 408-residue chain is UDP-N-acetylglucosamine--dolichyl-phosphate N-acetylglucosaminephosphotransferase (408 aa).

Residues 1–10 are Lumenal-facing; it reads MWAFSELPMP. A helical transmembrane segment spans residues 11-38; the sequence is LLINLIVSLLGFVATVTLIPAFRGHFIA. At 39 to 58 the chain is on the cytoplasmic side; sequence ARLCGQDLNKTSRQQIPESQ. UDP-N-acetyl-alpha-D-glucosamine-binding positions include 44-46 and glutamate 56; that span reads QDL. Leucine 46 is a binding site for tunicamycin A1. Residues 59–78 form a helical membrane-spanning segment; that stretch reads GVISGAVFLIILFCFIPFPF. Residues 79-91 are Lumenal-facing; it reads LNCFVKEQCKAFP. A helical transmembrane segment spans residues 92 to 118; the sequence is HHEFVALIGALLAICCMIFLGFADDVL. Residue asparagine 119 participates in tunicamycin A1 binding. Residues 119-121 are Cytoplasmic-facing; it reads NLR. The helical transmembrane segment at 122–143 threads the bilayer; that stretch reads WRHKLLLPTAASLPLLMVYFTN. Lysine 125 lines the dolichyl phosphate pocket. Topologically, residues 144-166 are lumenal; it reads FGNTTIVVPKPFRPILGLHLDLG. N-linked (GlcNAc...) asparagine glycosylation occurs at asparagine 146. Residues 167–186 traverse the membrane as a helical segment; it reads ILYYVYMGLLAVFCTNAINI. 178–186 provides a ligand contact to dolichyl phosphate; sequence VFCTNAINI. Asparagine 185 serves as a coordination point for tunicamycin A1. Residue asparagine 185 participates in Mg(2+) binding. The Cytoplasmic segment spans residues 187-192; the sequence is LAGING. Asparagine 191 serves as a coordination point for UDP-N-acetyl-alpha-D-glucosamine. A helical transmembrane segment spans residues 193–213; it reads LEAGQSLVISASIIVFNLVEL. Topologically, residues 214-218 are lumenal; sequence EGDCR. A helical membrane pass occupies residues 219-242; it reads DDHVFSLYFMIPFFFTTLGLLYHN. The Cytoplasmic portion of the chain corresponds to 243–250; sequence WYPSRVFV. Residues 251-269 traverse the membrane as a helical segment; it reads GDTFCYFAGMTFAVVGILG. Aspartate 252 is a tunicamycin A1 binding site. Aspartate 252 provides a ligand contact to Mg(2+). Residues 270 to 271 are Lumenal-facing; the sequence is HF. Residues 272–293 traverse the membrane as a helical segment; the sequence is SKTMLLFFMPQVFNFLYSLPQL. Residues 294–375 are Cytoplasmic-facing; that stretch reads LHIIPCPRHR…LLLKVLGPIH (82 aa). UDP-N-acetyl-alpha-D-glucosamine is bound at residue 301–303; sequence RHR. A tunicamycin A1-binding site is contributed by arginine 303. The chain crosses the membrane as a helical span at residues 376–400; the sequence is ERNLTLLLLLLQILGSAITFSIRYQ. The Lumenal segment spans residues 401-408; the sequence is LVRLFYDV.

This sequence belongs to the glycosyltransferase 4 family. In terms of assembly, homodimer. Mg(2+) is required as a cofactor.

It localises to the endoplasmic reticulum membrane. It catalyses the reaction a di-trans,poly-cis-dolichyl phosphate + UDP-N-acetyl-alpha-D-glucosamine = an N-acetyl-alpha-D-glucosaminyl-diphospho-di-trans,poly-cis-dolichol + UMP. The protein operates within protein modification; protein glycosylation. Inhibited by natural nucleoside antibiotic tunicamycin, which acts as a structural analog and competitor of UDP-GlcNAc. Activated by mannosylphosphoryldolichol and phospholipids such as phosphatidylglycerol and phosphatidylcholine. In terms of biological role, UDP-N-acetylglucosamine--dolichyl-phosphate N-acetylglucosaminephosphotransferase that operates in the biosynthetic pathway of dolichol-linked oligosaccharides, the glycan precursors employed in protein asparagine (N)-glycosylation. The assembly of dolichol-linked oligosaccharides begins on the cytosolic side of the endoplasmic reticulum membrane and finishes in its lumen. The sequential addition of sugars to dolichol pyrophosphate produces dolichol-linked oligosaccharides containing fourteen sugars, including two GlcNAcs, nine mannoses and three glucoses. Once assembled, the oligosaccharide is transferred from the lipid to nascent proteins by oligosaccharyltransferases. Catalyzes the initial step of dolichol-linked oligosaccharide biosynthesis, transfering GlcNAc-1-P from cytosolic UDP-GlcNAc onto the carrier lipid dolichyl phosphate (P-dolichol), yielding GlcNAc-P-P-dolichol embedded in the cytoplasmic leaflet of the endoplasmic reticulum membrane. The sequence is that of UDP-N-acetylglucosamine--dolichyl-phosphate N-acetylglucosaminephosphotransferase from Homo sapiens (Human).